The chain runs to 238 residues: Type III pantothenate kinase (238 aa).

6–13 is a binding site for ATP; sequence DSGNTRIK. Residues Tyr-90 and 97-100 each bind substrate; that span reads GVDR. Residue Asp-99 is the Proton acceptor of the active site. Thr-122 serves as a coordination point for ATP. Thr-172 is a binding site for substrate.

The protein belongs to the type III pantothenate kinase family. Homodimer. NH4(+) serves as cofactor. K(+) is required as a cofactor.

The protein resides in the cytoplasm. The catalysed reaction is (R)-pantothenate + ATP = (R)-4'-phosphopantothenate + ADP + H(+). The protein operates within cofactor biosynthesis; coenzyme A biosynthesis; CoA from (R)-pantothenate: step 1/5. Its function is as follows. Catalyzes the phosphorylation of pantothenate (Pan), the first step in CoA biosynthesis. This chain is Type III pantothenate kinase, found in Dechloromonas aromatica (strain RCB).